The chain runs to 438 residues: sn-glycerol-3-phosphate-binding periplasmic protein UgpB (438 aa).

Positions 1 to 23 are cleaved as a signal peptide; it reads MKPLRYTASALALGLALMANAQA. The sn-glycerol 3-phosphate site is built by Tyr65, Glu89, Ser144, Ser270, Gly307, Tyr346, and Arg397.

This sequence belongs to the bacterial solute-binding protein 1 family. In terms of assembly, the complex is composed of two ATP-binding proteins (UgpC), two transmembrane proteins (UgpA and UgpE) and a solute-binding protein (UgpB).

The protein resides in the periplasm. Part of the ABC transporter complex UgpBAEC involved in sn-glycerol-3-phosphate (G3P) import. Binds G3P. The sequence is that of sn-glycerol-3-phosphate-binding periplasmic protein UgpB (ugpB) from Escherichia coli O1:K1 / APEC.